The following is a 439-amino-acid chain: L-tryptophan decarboxylase (439 aa).

It belongs to the phosphatidylserine decarboxylase family.

It catalyses the reaction L-tryptophan + H(+) = tryptamine + CO2. It participates in secondary metabolite biosynthesis. In terms of biological role, L-tryptophan decarboxylase; part of the gene cluster that mediates the biosynthesis of psilocybin, a psychotropic tryptamine-derived natural product. The first step in the pathway is the decarboxylation of L-tryptophan to tryptamine by the decarboxylase psiD. 4-hydroxy-L-tryptophan is accepted as substrate by psiD as well. The cytochrome P450 monooxygenase psiH then converts tryptamine to 4-hydroxytryptamine. The kinase psiK catalyzes the 4-O-phosphorylation step by converting 4-hydroxytryptamine into norbaeocystin. The methyltransferase psiM then catalyzes iterative methyl transfer to the amino group of norbaeocystin to yield psilocybin via a monomethylated intermediate, baeocystin. 4-hydroxy-6-methyl-l-tryptophancan also be converted the decarboxylase PsiD, kinase PsiK, and methyltransferase PsiM into respectively 6-methyl-norbaeocystin, 6-methylbaeocystin, and 6-methylpsilocybin. The protein is L-tryptophan decarboxylase of Psilocybe cubensis (Psychedelic mushroom).